The sequence spans 352 residues: uncharacterized protein (352 aa).

Asn14, Asn52, and Asn70 each carry an N-linked (GlcNAc...) asparagine glycan. Residues 41–73 (LSDYKKNKDTLNNSNNNINQPFENSNNFNNNSK) form a disordered region. Over residues 50–72 (TLNNSNNNINQPFENSNNFNNNS) the composition is skewed to low complexity. The chain crosses the membrane as a helical span at residues 131–151 (IIFKSSGLLITLLVLYLGTFF). 6 N-linked (GlcNAc...) asparagine glycosylation sites follow: Asn165, Asn186, Asn192, Asn193, Asn203, and Asn289. Positions 193 to 213 (NSSNSNNNNINNSNNNNNNNN) are enriched in low complexity. A disordered region spans residues 193–219 (NSSNSNNNNINNSNNNNNNNNRILSPN).

The protein resides in the membrane. This is an uncharacterized protein from Dictyostelium discoideum (Social amoeba).